A 945-amino-acid polypeptide reads, in one-letter code: Isoleucine--tRNA ligase (945 aa).

Positions 66 to 76 (PYANGDIHLGH) match the 'HIGH' region motif. Residue E581 coordinates L-isoleucyl-5'-AMP. Residues 622 to 626 (KMSKS) carry the 'KMSKS' region motif. Residue K625 coordinates ATP. Zn(2+) is bound by residues C908, C911, C928, and C931.

This sequence belongs to the class-I aminoacyl-tRNA synthetase family. IleS type 1 subfamily. Monomer. Zn(2+) is required as a cofactor.

Its subcellular location is the cytoplasm. The enzyme catalyses tRNA(Ile) + L-isoleucine + ATP = L-isoleucyl-tRNA(Ile) + AMP + diphosphate. In terms of biological role, catalyzes the attachment of isoleucine to tRNA(Ile). As IleRS can inadvertently accommodate and process structurally similar amino acids such as valine, to avoid such errors it has two additional distinct tRNA(Ile)-dependent editing activities. One activity is designated as 'pretransfer' editing and involves the hydrolysis of activated Val-AMP. The other activity is designated 'posttransfer' editing and involves deacylation of mischarged Val-tRNA(Ile). The protein is Isoleucine--tRNA ligase of Paraburkholderia xenovorans (strain LB400).